Here is a 307-residue protein sequence, read N- to C-terminus: 2-phospho-L-lactate transferase (307 aa).

7,8-didemethyl-8-hydroxy-5-deazariboflavin-binding residues include Asp48 and Lys87.

Belongs to the CofD family. Homodimer. It depends on Mg(2+) as a cofactor.

It carries out the reaction (2S)-lactyl-2-diphospho-5'-guanosine + 7,8-didemethyl-8-hydroxy-5-deazariboflavin = oxidized coenzyme F420-0 + GMP + H(+). It functions in the pathway cofactor biosynthesis; coenzyme F420 biosynthesis. In terms of biological role, catalyzes the transfer of the 2-phospholactate moiety from (2S)-lactyl-2-diphospho-5'-guanosine to 7,8-didemethyl-8-hydroxy-5-deazariboflavin (FO) with the formation of oxidized coenzyme F420-0 and GMP. This Methanosarcina acetivorans (strain ATCC 35395 / DSM 2834 / JCM 12185 / C2A) protein is 2-phospho-L-lactate transferase.